We begin with the raw amino-acid sequence, 76 residues long: ATP synthase subunit 9, mitochondrial (76 aa).

Helical transmembrane passes span 13–35 (GIST…ALIQ) and 50–72 (FAIL…SFLL).

The protein belongs to the ATPase C chain family. As to quaternary structure, F-type ATPases have 2 components, CF(1) - the catalytic core - and CF(0) - the membrane proton channel. In yeast, the dimeric form of ATP synthase consists of 18 polypeptides: alpha, beta, gamma, delta, epsilon, 4 (B), 5 (OSCP), 6 (A), 8, 9 (C), d, E (Tim11), f, g, h, i, j and k.

It is found in the mitochondrion membrane. Mitochondrial membrane ATP synthase (F(1)F(0) ATP synthase or Complex V) produces ATP from ADP in the presence of a proton gradient across the membrane which is generated by electron transport complexes of the respiratory chain. F-type ATPases consist of two structural domains, F(1) - containing the extramembraneous catalytic core and F(0) - containing the membrane proton channel, linked together by a central stalk and a peripheral stalk. During catalysis, ATP synthesis in the catalytic domain of F(1) is coupled via a rotary mechanism of the central stalk subunits to proton translocation. Part of the complex F(0) domain. A homomeric c-ring of probably 10 subunits is part of the complex rotary element. The sequence is that of ATP synthase subunit 9, mitochondrial (ATP9) from Eremothecium gossypii (strain ATCC 10895 / CBS 109.51 / FGSC 9923 / NRRL Y-1056) (Yeast).